Here is a 1095-residue protein sequence, read N- to C-terminus: Voltage-gated inwardly rectifying potassium channel KCNH3 (1095 aa).

Residues methionine 1–aspartate 228 are Cytoplasmic-facing. Residues isoleucine 18–histidine 90 form the PAS domain. The PAC domain maps to phenylalanine 93–tryptophan 145. Basic and acidic residues predominate over residues lysine 137–glycine 150. Residues lysine 137–lysine 161 are disordered. The helical transmembrane segment at glycine 229–serine 249 threads the bilayer. Residues threonine 250 to glycine 259 lie on the Extracellular side of the membrane. A helical transmembrane segment spans residues proline 260–phenylalanine 280. Over arginine 281–tyrosine 302 the chain is Cytoplasmic. Residues valine 303 to phenylalanine 323 traverse the membrane as a helical segment. The Extracellular segment spans residues lysine 324 to alanine 331. The chain crosses the membrane as a helical; Voltage-sensor span at residues histidine 332–tyrosine 352. The Cytoplasmic portion of the chain corresponds to serine 353 to threonine 361. The chain crosses the membrane as a helical span at residues leucine 362 to glycine 382. Residues glutamine 383 to isoleucine 464 lie on the Extracellular side of the membrane. The segment at proline 417 to asparagine 447 is disordered. A compositionally biased stretch (low complexity) spans glycine 419 to serine 436. N-linked (GlcNAc...) asparagine glycosylation is found at asparagine 421, asparagine 428, and asparagine 447. The segment at residues threonine 465–asparagine 485 is an intramembrane region (pore-forming). Positions serine 476–asparagine 481 match the Selectivity filter motif. Residues threonine 486–lysine 490 lie on the Extracellular side of the membrane. The helical transmembrane segment at isoleucine 491–valine 511 threads the bilayer. Residues threonine 512–valine 1095 lie on the Cytoplasmic side of the membrane. Leucine 593–arginine 708 is a binding site for a nucleoside 3',5'-cyclic phosphate. Disordered regions lie at residues glutamate 740–methionine 823, valine 854–alanine 883, and glycine 965–proline 1069. A compositionally biased stretch (basic residues) spans threonine 784 to proline 796. Low complexity predominate over residues serine 857–glycine 872. Positions histidine 974–proline 991 are enriched in pro residues.

The protein belongs to the potassium channel family. H (Eag) (TC 1.A.1.20) subfamily. Kv12.2/KCNH3 sub-subfamily. In terms of assembly, the potassium channel is probably composed of a homo- or heterotetrameric complex of pore-forming alpha subunits that can associate with modulating beta subunits. Interacts with KCNE1 and KCNE3; these interactions regulate KCNH3 trafficking to the plasma membrane and its subsequent voltage-gated potassium channel activity. In terms of processing, N-glycosylated. N-glycosylation mediates traffick to the cell membrane but is not necessary for voltage-gated potassium channel activity. Detected in brain, but not in other tissues.

The protein localises to the cell membrane. It catalyses the reaction K(+)(in) = K(+)(out). Functionally, pore-forming (alpha) subunit of a voltage-gated inwardly rectifying potassium channel. Charactherized by a fast rate of activation during depolarization followed by a rapid inactivation at much more depolarized value causing inward rectification due to a C-type inactivation mechanism. Exhibits a rapid recovery from inactivation. In Mus musculus (Mouse), this protein is Voltage-gated inwardly rectifying potassium channel KCNH3.